We begin with the raw amino-acid sequence, 754 residues long: Phosphoribosylformylglycinamidine synthase subunit PurL (754 aa).

Histidine 52 is a catalytic residue. The ATP site is built by tyrosine 55 and lysine 95. Glutamate 97 contributes to the Mg(2+) binding site. Residues 98–101 and arginine 120 contribute to the substrate site; that span reads SHNH. Histidine 99 (proton acceptor) is an active-site residue. Aspartate 121 serves as a coordination point for Mg(2+). A substrate-binding site is contributed by glutamine 244. Aspartate 272 serves as a coordination point for Mg(2+). Residue 316–318 participates in substrate binding; that stretch reads ESQ. The ATP site is built by asparagine 504 and glycine 541. Asparagine 542 serves as a coordination point for Mg(2+). Serine 544 serves as a coordination point for substrate.

This sequence belongs to the FGAMS family. Monomer. Part of the FGAM synthase complex composed of 1 PurL, 1 PurQ and 2 PurS subunits.

It is found in the cytoplasm. It catalyses the reaction N(2)-formyl-N(1)-(5-phospho-beta-D-ribosyl)glycinamide + L-glutamine + ATP + H2O = 2-formamido-N(1)-(5-O-phospho-beta-D-ribosyl)acetamidine + L-glutamate + ADP + phosphate + H(+). Its pathway is purine metabolism; IMP biosynthesis via de novo pathway; 5-amino-1-(5-phospho-D-ribosyl)imidazole from N(2)-formyl-N(1)-(5-phospho-D-ribosyl)glycinamide: step 1/2. Part of the phosphoribosylformylglycinamidine synthase complex involved in the purines biosynthetic pathway. Catalyzes the ATP-dependent conversion of formylglycinamide ribonucleotide (FGAR) and glutamine to yield formylglycinamidine ribonucleotide (FGAM) and glutamate. The FGAM synthase complex is composed of three subunits. PurQ produces an ammonia molecule by converting glutamine to glutamate. PurL transfers the ammonia molecule to FGAR to form FGAM in an ATP-dependent manner. PurS interacts with PurQ and PurL and is thought to assist in the transfer of the ammonia molecule from PurQ to PurL. The protein is Phosphoribosylformylglycinamidine synthase subunit PurL of Salinibacter ruber (strain DSM 13855 / M31).